A 309-amino-acid chain; its full sequence is Ornithine carbamoyltransferase (309 aa).

Carbamoyl phosphate is bound by residues 56-59 (STRT), Gln-83, Arg-107, and 134-137 (HPCQ). L-ornithine is bound by residues Asn-165, Asp-223, and 227-228 (SM). Carbamoyl phosphate contacts are provided by residues 263 to 264 (CL) and Arg-291.

This sequence belongs to the aspartate/ornithine carbamoyltransferase superfamily. OTCase family.

It localises to the cytoplasm. The catalysed reaction is carbamoyl phosphate + L-ornithine = L-citrulline + phosphate + H(+). It functions in the pathway amino-acid biosynthesis; L-arginine biosynthesis; L-arginine from L-ornithine and carbamoyl phosphate: step 1/3. Reversibly catalyzes the transfer of the carbamoyl group from carbamoyl phosphate (CP) to the N(epsilon) atom of ornithine (ORN) to produce L-citrulline. The protein is Ornithine carbamoyltransferase of Burkholderia mallei (strain ATCC 23344).